A 244-amino-acid polypeptide reads, in one-letter code: Orotidine 5'-phosphate decarboxylase (244 aa).

Substrate-binding positions include Asp12, Lys34, 61 to 70, Thr125, Arg187, Gln196, Gly216, and Arg217; that span reads DLKLFDIPNT. Lys63 functions as the Proton donor in the catalytic mechanism.

The protein belongs to the OMP decarboxylase family. Type 1 subfamily. Homodimer.

The catalysed reaction is orotidine 5'-phosphate + H(+) = UMP + CO2. Its pathway is pyrimidine metabolism; UMP biosynthesis via de novo pathway; UMP from orotate: step 2/2. In terms of biological role, catalyzes the decarboxylation of orotidine 5'-monophosphate (OMP) to uridine 5'-monophosphate (UMP). The protein is Orotidine 5'-phosphate decarboxylase of Dictyoglomus thermophilum (strain ATCC 35947 / DSM 3960 / H-6-12).